The following is a 182-amino-acid chain: MHLNKYSEVVERLENEEFEQVELGAEVYQQLLAIYLYQNKLADAKLLWMRVPANLRDDKELIQLNLLNIALQNNNYADFFKHIKYEWSERVKSPVEDLLNKQREELFKLMGSAYMSIYQHNLLELSLMSEDELKHACAALNWTEELDGDRVILKPKVQEAPPARGNDDQLLKLTEFVTFLEN.

A PCI domain is found at 1-167 (MHLNKYSEVV…QEAPPARGND (167 aa)).

Belongs to the CSN8 family. In terms of assembly, essential component of the CSN complex, probably composed of CSN1b, alien/CSN2, CSN3, CSN4, CSN5, CSN6, CSN7 and CSN8.

The protein localises to the cytoplasm. It is found in the nucleus. In terms of biological role, probable component of the COP9 signalosome complex (CSN), a complex involved in various cellular and developmental processes. The CSN complex is an essential regulator of the ubiquitin (Ubl) conjugation pathway by mediating the deneddylation of the cullin subunits of the SCF-type E3 ligase complexes, leading to decrease the Ubl ligase activity of SCF. The CSN complex plays an essential role in oogenesis and embryogenesis and is required for proper photoreceptor R cell differentiation and promote lamina glial cell migration or axon targeting. It also promotes Ubl-dependent degradation of cyclin E (CycE) during early oogenesis. This chain is COP9 signalosome complex subunit 8 (CSN8), found in Drosophila melanogaster (Fruit fly).